Reading from the N-terminus, the 888-residue chain is Alanine--tRNA ligase (888 aa).

Residues His564, His568, Cys676, and His680 each coordinate Zn(2+).

The protein belongs to the class-II aminoacyl-tRNA synthetase family. Zn(2+) serves as cofactor.

It is found in the cytoplasm. It catalyses the reaction tRNA(Ala) + L-alanine + ATP = L-alanyl-tRNA(Ala) + AMP + diphosphate. Catalyzes the attachment of alanine to tRNA(Ala) in a two-step reaction: alanine is first activated by ATP to form Ala-AMP and then transferred to the acceptor end of tRNA(Ala). Also edits incorrectly charged Ser-tRNA(Ala) and Gly-tRNA(Ala) via its editing domain. The protein is Alanine--tRNA ligase of Bartonella tribocorum (strain CIP 105476 / IBS 506).